The sequence spans 341 residues: MSVPIPGIKDISKLKFFYGFKYLWNPTVYNKIFDKLDLTKTYKHPEELKVLDLYPGVGIQSAIFYNKYCPRQYSLLEKRSSLYKFLNAKFEGSPLQILKRDPYDWSTYSNLIDEERIFVPEVQSSDHINDKFLTVANVTGEGSEGLIMQWLSCIGNKNWLYRFGKVKMLLWMPSTTARKLLARPGMHSRSKCSVVREAFTDTKLIAISDANELKGFDSQCIEEWDPILFSAAEIWPTKGKPIALVEMDPIDFDFDVDNWDYVTRHLMILKRTPLNTVMDSLGHGGQQYFNSRITDKDLLKKCPIDLTNDEFIYLTKLFMEWPFKPDILMDFVDMYQTEHSG.

Positions 23, 77, 101, and 137 each coordinate S-adenosyl-L-methionine.

The protein belongs to the class I-like SAM-binding methyltransferase superfamily. rRNA adenine N(6)-methyltransferase family.

It localises to the mitochondrion intermembrane space. Functionally, mitochondrial transcription factor that confers selective promoter recognition on the core subunit of the yeast mitochondrial RNA polymerase. Interacts with DNA in a non-specific manner. This Saccharomyces cerevisiae (strain ATCC 204508 / S288c) (Baker's yeast) protein is Mitochondrial transcription factor 1 (MTF1).